A 300-amino-acid chain; its full sequence is Aspartate carbamoyltransferase catalytic subunit (300 aa).

The carbamoyl phosphate site is built by R50 and T51. Residue K78 coordinates L-aspartate. R100, H127, and Q130 together coordinate carbamoyl phosphate. Positions 160 and 210 each coordinate L-aspartate. 2 residues coordinate carbamoyl phosphate: A253 and P254.

This sequence belongs to the aspartate/ornithine carbamoyltransferase superfamily. ATCase family. In terms of assembly, heterododecamer (2C3:3R2) of six catalytic PyrB chains organized as two trimers (C3), and six regulatory PyrI chains organized as three dimers (R2).

The enzyme catalyses carbamoyl phosphate + L-aspartate = N-carbamoyl-L-aspartate + phosphate + H(+). It functions in the pathway pyrimidine metabolism; UMP biosynthesis via de novo pathway; (S)-dihydroorotate from bicarbonate: step 2/3. Catalyzes the condensation of carbamoyl phosphate and aspartate to form carbamoyl aspartate and inorganic phosphate, the committed step in the de novo pyrimidine nucleotide biosynthesis pathway. The protein is Aspartate carbamoyltransferase catalytic subunit of Staphylococcus saprophyticus subsp. saprophyticus (strain ATCC 15305 / DSM 20229 / NCIMB 8711 / NCTC 7292 / S-41).